The chain runs to 405 residues: Acetate kinase (405 aa).

Residue N7 coordinates Mg(2+). K14 lines the ATP pocket. Residue R90 participates in substrate binding. D147 acts as the Proton donor/acceptor in catalysis. ATP is bound by residues 207 to 211 (HLGNG), 282 to 284 (DFR), and 331 to 335 (GVGEN). E384 contributes to the Mg(2+) binding site.

The protein belongs to the acetokinase family. As to quaternary structure, homodimer. Requires Mg(2+) as cofactor. Mn(2+) serves as cofactor.

It is found in the cytoplasm. The catalysed reaction is acetate + ATP = acetyl phosphate + ADP. It participates in metabolic intermediate biosynthesis; acetyl-CoA biosynthesis; acetyl-CoA from acetate: step 1/2. Its function is as follows. Catalyzes the formation of acetyl phosphate from acetate and ATP. Can also catalyze the reverse reaction. This is Acetate kinase from Clostridium kluyveri (strain ATCC 8527 / DSM 555 / NBRC 12016 / NCIMB 10680 / K1).